Reading from the N-terminus, the 155-residue chain is uncharacterized protein (155 aa).

Positions 1-21 (MFFIVAAGFVIAALIAAIGMA) are cleaved as a signal peptide. Residues 35–155 (GQTKPATTRP…PVYRPPEEMV (121 aa)) are disordered. A compositionally biased stretch (polar residues) spans 118-128 (ATASNTPQNEA).

This is an uncharacterized protein from Schizosaccharomyces pombe (strain 972 / ATCC 24843) (Fission yeast).